A 585-amino-acid polypeptide reads, in one-letter code: Glycerol-3-phosphate dehydrogenase (585 aa).

An FAD-binding site is contributed by 37 to 65 (DVVVIGGGVVGSGCALDAATRGLKVALVE).

Belongs to the FAD-dependent glycerol-3-phosphate dehydrogenase family. Requires FAD as cofactor.

It is found in the cytoplasm. It carries out the reaction a quinone + sn-glycerol 3-phosphate = dihydroxyacetone phosphate + a quinol. The protein is Glycerol-3-phosphate dehydrogenase (glpD) of Mycobacterium leprae (strain TN).